Consider the following 87-residue polypeptide: Small ribosomal subunit protein uS15 (87 aa).

Over residues 1 to 19 (MEKARKEQLIREYATHEGD) the composition is skewed to basic and acidic residues. The interval 1–22 (MEKARKEQLIREYATHEGDTGS) is disordered.

Belongs to the universal ribosomal protein uS15 family. As to quaternary structure, part of the 30S ribosomal subunit. Forms a bridge to the 50S subunit in the 70S ribosome, contacting the 23S rRNA.

Functionally, one of the primary rRNA binding proteins, it binds directly to 16S rRNA where it helps nucleate assembly of the platform of the 30S subunit by binding and bridging several RNA helices of the 16S rRNA. Forms an intersubunit bridge (bridge B4) with the 23S rRNA of the 50S subunit in the ribosome. In Clostridium novyi (strain NT), this protein is Small ribosomal subunit protein uS15.